A 378-amino-acid chain; its full sequence is Metacaspase-1B (378 aa).

The segment at 1–70 is disordered; the sequence is MCSPPPYPPQ…QEAQSFGGGA (70 aa). The span at 10–29 shows a compositional bias: low complexity; that stretch reads QGHHYPPSPHGSYYSPTPYG. Residues histidine 169 and cysteine 225 contribute to the active site.

This sequence belongs to the peptidase C14B family.

Involved in cell death (apoptosis). This is Metacaspase-1B (casB) from Aspergillus terreus (strain NIH 2624 / FGSC A1156).